Consider the following 272-residue polypeptide: Sulfate transporter CysZ (272 aa).

Transmembrane regions (helical) follow at residues 29 to 49 (FVIIPILLNTILLCGLFWLFI), 66 to 86 (WLSFLSVILLTLSILTILLLF), 148 to 168 (IIALFLLSFIPLVGQTIVPVL), and 219 to 239 (FVPVINLLIMPVAVCGATLMW).

The protein belongs to the CysZ family.

The protein localises to the cell inner membrane. Functionally, high affinity, high specificity proton-dependent sulfate transporter, which mediates sulfate uptake. Provides the sulfur source for the cysteine synthesis pathway. This is Sulfate transporter CysZ from Haemophilus influenzae (strain 86-028NP).